Consider the following 66-residue polypeptide: Large ribosomal subunit protein bL33c (66 aa).

It belongs to the bacterial ribosomal protein bL33 family.

It is found in the plastid. The protein localises to the chloroplast. This is Large ribosomal subunit protein bL33c from Lepidium virginicum (Virginia pepperweed).